The primary structure comprises 561 residues: Carboxylesterase 1E (561 aa).

Positions 1-18 (MCLYALILVFLAAFTAGG) are cleaved as a signal peptide. 2 N-linked (GlcNAc...) asparagine glycosylation sites follow: Asn-79 and Asn-107. The cysteines at positions 87 and 116 are disulfide-linked. Ser-221 (acyl-ester intermediate) is an active-site residue. Cys-273 and Cys-284 are disulfide-bonded. Catalysis depends on charge relay system residues Glu-353 and His-466. N-linked (GlcNAc...) asparagine glycosylation is present at Asn-489. Residues 558–561 (HTEL) carry the Prevents secretion from ER motif.

The protein belongs to the type-B carboxylesterase/lipase family. Expressed in liver.

Its subcellular location is the endoplasmic reticulum lumen. It localises to the microsome membrane. The enzyme catalyses a carboxylic ester + H2O = an alcohol + a carboxylate + H(+). The catalysed reaction is all-trans-retinyl hexadecanoate + H2O = all-trans-retinol + hexadecanoate + H(+). Involved in the detoxification of xenobiotics and in the activation of ester and amide prodrugs. Hydrolyzes retinyl esters. The chain is Carboxylesterase 1E (Ces1e) from Rattus norvegicus (Rat).